Reading from the N-terminus, the 177-residue chain is Large ribosomal subunit protein uL6 (177 aa).

The protein belongs to the universal ribosomal protein uL6 family. Part of the 50S ribosomal subunit.

Its function is as follows. This protein binds to the 23S rRNA, and is important in its secondary structure. It is located near the subunit interface in the base of the L7/L12 stalk, and near the tRNA binding site of the peptidyltransferase center. The chain is Large ribosomal subunit protein uL6 from Rickettsia akari (strain Hartford).